Consider the following 318-residue polypeptide: Aspartate carbamoyltransferase catalytic subunit (318 aa).

Carbamoyl phosphate contacts are provided by Arg-62 and Thr-63. An L-aspartate-binding site is contributed by Lys-90. The carbamoyl phosphate site is built by Arg-112, His-140, and Gln-143. Positions 173 and 227 each coordinate L-aspartate. Carbamoyl phosphate-binding residues include Gly-268 and Pro-269.

This sequence belongs to the aspartate/ornithine carbamoyltransferase superfamily. ATCase family. As to quaternary structure, heterododecamer (2C3:3R2) of six catalytic PyrB chains organized as two trimers (C3), and six regulatory PyrI chains organized as three dimers (R2).

The catalysed reaction is carbamoyl phosphate + L-aspartate = N-carbamoyl-L-aspartate + phosphate + H(+). Its pathway is pyrimidine metabolism; UMP biosynthesis via de novo pathway; (S)-dihydroorotate from bicarbonate: step 2/3. Its function is as follows. Catalyzes the condensation of carbamoyl phosphate and aspartate to form carbamoyl aspartate and inorganic phosphate, the committed step in the de novo pyrimidine nucleotide biosynthesis pathway. This Desulfotalea psychrophila (strain LSv54 / DSM 12343) protein is Aspartate carbamoyltransferase catalytic subunit.